We begin with the raw amino-acid sequence, 510 residues long: Putative serine protease K12H4.7 (510 aa).

The signal sequence occupies residues M1–S19. S187 (charge relay system) is an active-site residue. N234 is a glycosylation site (N-linked (GlcNAc...) asparagine). D452 (charge relay system) is an active-site residue. N473 is a glycosylation site (N-linked (GlcNAc...) asparagine). The Charge relay system role is filled by H477.

This sequence belongs to the peptidase S28 family.

The chain is Putative serine protease K12H4.7 from Caenorhabditis elegans.